The chain runs to 469 residues: Swarming motility regulation sensor protein RssA (469 aa).

2 helical membrane passes run 12–32 (IIFQ…WVKY) and 167–187 (VPLL…AYFS). Residues 245–459 (DAAHELRTPI…GFIIDLPESY (215 aa)) form the Histidine kinase domain. H248 carries the phosphohistidine; by autocatalysis modification.

The protein resides in the cell inner membrane. The catalysed reaction is ATP + protein L-histidine = ADP + protein N-phospho-L-histidine.. Functionally, member of the two-component regulatory system RssA/RssB involved in regulation of swarming motility which has been shown to be inhibited by saturated fatty acids. RssA/RssB regulates cellular fatty acid composition, hemolysin production and cell surface topography. RssA/RssB negatively regulates the activity of SlhBA. It can also act as a negative regulator for the control of the swarming initiation. This Serratia marcescens protein is Swarming motility regulation sensor protein RssA (rssA).